A 325-amino-acid chain; its full sequence is Acetyl-coenzyme A carboxylase carboxyl transferase subunit beta (325 aa).

The 270-residue stretch at 24–293 (LWIKCPDSGH…AEIEVVTPEP (270 aa)) folds into the CoA carboxyltransferase N-terminal domain.

It belongs to the AccD/PCCB family. In terms of assembly, acetyl-CoA carboxylase is a heterohexamer composed of biotin carboxyl carrier protein (AccB), biotin carboxylase (AccC) and two subunits each of ACCase subunit alpha (AccA) and ACCase subunit beta (AccD).

It localises to the cytoplasm. It carries out the reaction N(6)-carboxybiotinyl-L-lysyl-[protein] + acetyl-CoA = N(6)-biotinyl-L-lysyl-[protein] + malonyl-CoA. It functions in the pathway lipid metabolism; malonyl-CoA biosynthesis; malonyl-CoA from acetyl-CoA: step 1/1. Its function is as follows. Component of the acetyl coenzyme A carboxylase (ACC) complex. Biotin carboxylase (BC) catalyzes the carboxylation of biotin on its carrier protein (BCCP) and then the CO(2) group is transferred by the transcarboxylase to acetyl-CoA to form malonyl-CoA. In Rhodopseudomonas palustris (strain BisA53), this protein is Acetyl-coenzyme A carboxylase carboxyl transferase subunit beta.